We begin with the raw amino-acid sequence, 229 residues long: Non-structural protein P8 (229 aa).

Residues 13–31 (KMKHNQDRVEEPSQVRVDD) show a composition bias toward basic and acidic residues. The interval 13-46 (KMKHNQDRVEEPSQVRVDDTISQPPRYAPSAPMP) is disordered. The span at 36–46 (PPRYAPSAPMP) shows a compositional bias: low complexity. Transmembrane regions (helical) follow at residues 119-139 (IIHTTLLVAAVVALLTSVCTL) and 162-182 (SLNPMLGVVNLGATFLMMVCA).

This sequence belongs to the orbivirus NS3 family. In terms of assembly, forms homooligomers via coiled-coil motif. Interacts with host OPTN; this interaction inhibits innate immune response.

Its subcellular location is the host cell membrane. The protein localises to the host Golgi apparatus. In terms of biological role, plays a role in the inhibition of host innate immune response. Interacts with host OPTN and thus inhibits the recruitment of TBK1 to the host Golgi apparatus. In turn, downstream partner IRF3 cannot be activated and IFN-beta production is impaired. Functionally, facilitates viral particle release either by increasing plasma membrane permeability through a viroporin-like activity or by viral budding. This is Non-structural protein P8 (Segment-10) from Antilocapra americana (Pronghorn).